Reading from the N-terminus, the 642-residue chain is Core protein VP4 (642 aa).

Belongs to the orbivirus VP4 family.

Its subcellular location is the virion. The VP4 protein is one of the five proteins (with VP1, VP3, VP6 and VP7) which form the inner capsid of the virus. This is Core protein VP4 (Segment-4) from African horse sickness virus (AHSV).